The primary structure comprises 1630 residues: Transient receptor potential cation channel subfamily M member 1 (1630 aa).

Disordered stretches follow at residues Met-1–Lys-25, Pro-65–Lys-92, Ala-453–Glu-492, Leu-620–Ile-643, and Ser-824–Gln-858. Over Met-1 to Lys-877 the chain is Cytoplasmic. Residues Ser-8–Lys-25 show a composition bias toward low complexity. Residues Val-69–Lys-92 are compositionally biased toward polar residues. The segment covering Gly-474–Lys-485 has biased composition (basic residues). Basic and acidic residues-rich tracts occupy residues Lys-825 to Glu-834 and Gly-845 to His-855. Residues Phe-878–Val-898 traverse the membrane as a helical segment. Over Arg-899 to Glu-944 the chain is Extracellular. Residues Tyr-945–Leu-965 traverse the membrane as a helical segment. At Gln-966–Arg-975 the chain is on the cytoplasmic side. A helical membrane pass occupies residues Val-976–Asn-996. Residues Lys-997 to Lys-1008 lie on the Extracellular side of the membrane. Residues Met-1009 to Val-1029 form a helical membrane-spanning segment. Topologically, residues Ala-1030–Ala-1107 are cytoplasmic. A helical transmembrane segment spans residues Leu-1108–Phe-1128. Asn-1129 carries N-linked (GlcNAc...) asparagine glycosylation. The Extracellular segment spans residues Asn-1129–Pro-1158. A helical transmembrane segment spans residues Val-1159 to Gly-1179. Topologically, residues Arg-1180–Cys-1630 are cytoplasmic. Residues Ile-1235–Arg-1255 are a coiled coil. Disordered regions lie at residues Glu-1362–Leu-1414 and Cys-1575–Cys-1630.

The protein belongs to the transient receptor (TC 1.A.4) family. LTrpC subfamily. TRPM1 sub-subfamily. Interacts with TRPM3; the interaction results in the formation of a heteromultimeric cation channel complex that are functionally different from the homomeric channels. Interacts with GPR179. Associates with both guanine nucleotide-binding proteins G(o) and beta-gamma G protein dimer; implicated in directly regulating TRPM1 channel open-state.

It localises to the cell membrane. It is found in the endoplasmic reticulum membrane. The protein localises to the cell projection. Its subcellular location is the axon. The enzyme catalyses Ca(2+)(in) = Ca(2+)(out). The catalysed reaction is Mg(2+)(in) = Mg(2+)(out). It carries out the reaction Mn(2+)(in) = Mn(2+)(out). It catalyses the reaction Ni(2+)(in) = Ni(2+)(out). With respect to regulation, inhibited by extracellular zinc ions. Inhibited by intracellular Mg(2+). Activated by the neuroactive steroid pregnenolone sulfate. Negatively regulated by activation of GRM6 receptors in the ON-bipolar cells. Constitutively open nonselective divalent cation-conducting channels which mediate the influx of Ca(2+), Mg(2+), Mn(2+), Ba(2+), and Ni(2+) into the cytoplasm, leading to membrane depolarization. Impermeable to zinc ions. In addition, forms heteromultimeric ion channels with TRPM3 which are permeable for calcium and zinc ions. Plays an essential role for the depolarizing photoresponse of retinal ON bipolar cells. In the dark, tonic release of glutamate activates the G-protein coupled receptor for glutamate GRM6, its activation induces the release of G(o) protein and the beta-gamma G protein dimer. Both subunits can interact and inactivate the TRPM1 channel. A light onset, induces decrease in glutamate release and deactivation of GRM6 leading to channel opening and membrane depolarization. May play a role in metastasis suppression. The protein is Transient receptor potential cation channel subfamily M member 1 of Rattus norvegicus (Rat).